We begin with the raw amino-acid sequence, 231 residues long: Sensory transduction protein BceR (231 aa).

The region spanning 3–116 (KIMLIEDDHT…VLVAKIQAIL (114 aa)) is the Response regulatory domain. D52 is modified (4-aspartylphosphate). The ompR/PhoB-type DNA-binding region spans 127–225 (TQLKTWCGAT…KVGQGYMAKE (99 aa)).

Phosphorylated by BceS.

It localises to the cytoplasm. Functionally, member of the two-component regulatory system BceS/BceR involved in the regulation of bacitracin resistance. When activated by BceS, binds to the upstream region of the bceAB promoter and up-regulates the expression of these two genes. This is Sensory transduction protein BceR (bceR) from Halalkalibacterium halodurans (strain ATCC BAA-125 / DSM 18197 / FERM 7344 / JCM 9153 / C-125) (Bacillus halodurans).